The primary structure comprises 67 residues: Protein SlyX homolog (67 aa).

Belongs to the SlyX family.

This Mesorhizobium japonicum (strain LMG 29417 / CECT 9101 / MAFF 303099) (Mesorhizobium loti (strain MAFF 303099)) protein is Protein SlyX homolog.